We begin with the raw amino-acid sequence, 1013 residues long: Alpha-2-macroglobulin homolog (1013 aa).

The tract at residues 804–844 (AQRGANGERDGLRETVPVRPAGARQLLSGSGSVGADKAGGN) is disordered.

It belongs to the protease inhibitor I39 (alpha-2-macroglobulin) family. Bacterial alpha-2-macroglobulin subfamily.

This Deinococcus radiodurans (strain ATCC 13939 / DSM 20539 / JCM 16871 / CCUG 27074 / LMG 4051 / NBRC 15346 / NCIMB 9279 / VKM B-1422 / R1) protein is Alpha-2-macroglobulin homolog.